Here is a 359-residue protein sequence, read N- to C-terminus: Phosphate acyltransferase (359 aa).

Belongs to the PlsX family. In terms of assembly, homodimer. Probably interacts with PlsY.

Its subcellular location is the cytoplasm. It catalyses the reaction a fatty acyl-[ACP] + phosphate = an acyl phosphate + holo-[ACP]. Its pathway is lipid metabolism; phospholipid metabolism. In terms of biological role, catalyzes the reversible formation of acyl-phosphate (acyl-PO(4)) from acyl-[acyl-carrier-protein] (acyl-ACP). This enzyme utilizes acyl-ACP as fatty acyl donor, but not acyl-CoA. This is Phosphate acyltransferase from Citrobacter koseri (strain ATCC BAA-895 / CDC 4225-83 / SGSC4696).